The sequence spans 208 residues: Recombination protein RecR (208 aa).

The C4-type zinc finger occupies 57-72; it reads CALCNTLTEQEVCVTC. Residues 80 to 187 form the Toprim domain; the sequence is SKLCVVETPA…QVTRLARGVP (108 aa).

Belongs to the RecR family.

Its function is as follows. May play a role in DNA repair. It seems to be involved in an RecBC-independent recombinational process of DNA repair. It may act with RecF and RecO. The chain is Recombination protein RecR from Polaromonas naphthalenivorans (strain CJ2).